A 213-amino-acid chain; its full sequence is Kynurenine formamidase (213 aa).

Trp18 contributes to the substrate binding site. Positions 48, 52, and 54 each coordinate Zn(2+). Residue His58 is the Proton donor/acceptor of the active site. Positions 160 and 172 each coordinate Zn(2+).

Belongs to the Cyclase 1 superfamily. KynB family. As to quaternary structure, homodimer. The cofactor is Zn(2+).

The catalysed reaction is N-formyl-L-kynurenine + H2O = L-kynurenine + formate + H(+). The protein operates within amino-acid degradation; L-tryptophan degradation via kynurenine pathway; L-kynurenine from L-tryptophan: step 2/2. Catalyzes the hydrolysis of N-formyl-L-kynurenine to L-kynurenine, the second step in the kynurenine pathway of tryptophan degradation. This Burkholderia cenocepacia (strain HI2424) protein is Kynurenine formamidase.